We begin with the raw amino-acid sequence, 298 residues long: MGLAGGARVVLFVVAAAAAAALTAAADQIFTSSGAPFGRNSREPRYHVEFHPVDAPFNPENGQESVPMTSHVGKHYTCFLPVEETKTMKSIIPQNATNVIIESERRVKPKDPDELLEILKDQCFYRHEGWWSYEFCYYGKIRQVHVEGEKVIQEYVLGEYDADATDAYYENQTSDSADEDDNLIDTSKRYHVHLYTNGTVCDLTDMPRETEVRFVCSEPTVVISSIKEISSCKYVLTVQSPMLCKNPLFQQEKRTLSIHCNELLAEAEATVDDDSLPKEAQIIIPDPDGLHNYAAYAT.

The signal sequence occupies residues 1–25 (MGLAGGARVVLFVVAAAAAAALTAA). N-linked (GlcNAc...) asparagine glycosylation occurs at N95. The 126-residue stretch at 121 to 246 (DQCFYRHEGW…TVQSPMLCKN (126 aa)) folds into the MRH domain. A disulfide bond links C123 and C136. A mannooligosaccharide derivative is bound by residues W130, W131, and Q143. N171 and N197 each carry an N-linked (GlcNAc...) asparagine glycan. 2 cysteine pairs are disulfide-bonded: C201–C232 and C216–C244. Residues D202, R208, E228, and Y234 each contribute to the a mannooligosaccharide derivative site.

This sequence belongs to the OS-9 family. As to quaternary structure, interacts with HRD3.

The protein localises to the endoplasmic reticulum. Functionally, lectin which functions in endoplasmic reticulum (ER) quality control and ER-associated degradation (ERAD). May bind terminally misfolded non-glycosylated proteins as well as improperly folded glycoproteins, retain them in the ER, and possibly transfer them to the ubiquitination machinery and promote their degradation. This is Protein OS-9 homolog from Oryza sativa subsp. japonica (Rice).